Reading from the N-terminus, the 111-residue chain is Nucleoid-associated protein Clim_0875 (111 aa).

Belongs to the YbaB/EbfC family. Homodimer.

The protein localises to the cytoplasm. It localises to the nucleoid. Its function is as follows. Binds to DNA and alters its conformation. May be involved in regulation of gene expression, nucleoid organization and DNA protection. The polypeptide is Nucleoid-associated protein Clim_0875 (Chlorobium limicola (strain DSM 245 / NBRC 103803 / 6330)).